Consider the following 361-residue polypeptide: Histidine biosynthesis bifunctional protein HisB (361 aa).

The tract at residues 1 to 172 (MSQPTLFIDR…PKTTACERPP (172 aa)) is histidinol-phosphatase. The Nucleophile role is filled by Asp9. 2 residues coordinate Mg(2+): Asp9 and Asp11. Asp11 (proton donor) is an active-site residue. Residues Cys92, His94, Cys100, and Cys102 each contribute to the Zn(2+) site. Position 129 (Asp129) interacts with Mg(2+). The imidazoleglycerol-phosphate dehydratase stretch occupies residues 173-361 (RYAEVVRTTK…NELPSSKGVL (189 aa)).

In the N-terminal section; belongs to the histidinol-phosphatase family. This sequence in the C-terminal section; belongs to the imidazoleglycerol-phosphate dehydratase family. Requires Mg(2+) as cofactor. Zn(2+) is required as a cofactor.

The protein resides in the cytoplasm. The enzyme catalyses D-erythro-1-(imidazol-4-yl)glycerol 3-phosphate = 3-(imidazol-4-yl)-2-oxopropyl phosphate + H2O. The catalysed reaction is L-histidinol phosphate + H2O = L-histidinol + phosphate. Its pathway is amino-acid biosynthesis; L-histidine biosynthesis; L-histidine from 5-phospho-alpha-D-ribose 1-diphosphate: step 6/9. It functions in the pathway amino-acid biosynthesis; L-histidine biosynthesis; L-histidine from 5-phospho-alpha-D-ribose 1-diphosphate: step 8/9. The protein is Histidine biosynthesis bifunctional protein HisB of Actinobacillus pleuropneumoniae serotype 7 (strain AP76).